Here is a 194-residue protein sequence, read N- to C-terminus: Peptidyl-tRNA hydrolase (194 aa).

A tRNA-binding site is contributed by Tyr-17. Residue His-22 is the Proton acceptor of the active site. TRNA contacts are provided by Phe-68, Asn-70, and Asn-116.

This sequence belongs to the PTH family. In terms of assembly, monomer.

The protein localises to the cytoplasm. The enzyme catalyses an N-acyl-L-alpha-aminoacyl-tRNA + H2O = an N-acyl-L-amino acid + a tRNA + H(+). In terms of biological role, hydrolyzes ribosome-free peptidyl-tRNAs (with 1 or more amino acids incorporated), which drop off the ribosome during protein synthesis, or as a result of ribosome stalling. Its function is as follows. Catalyzes the release of premature peptidyl moieties from peptidyl-tRNA molecules trapped in stalled 50S ribosomal subunits, and thus maintains levels of free tRNAs and 50S ribosomes. This is Peptidyl-tRNA hydrolase from Haemophilus influenzae (strain 86-028NP).